The chain runs to 636 residues: Chitin synthase VI (636 aa).

The next 4 helical transmembrane spans lie at 23–43 (LQWF…LFCI), 374–394 (TIRT…TTTA), 399–419 (LPVG…LYFG), and 427–447 (IWFY…YMVY). The tract at residues 595-636 (QRLRLEQRPRTGPSLNARWQNGPQASETSQGRSQVDDVGIAF) is disordered. The segment covering 607 to 627 (PSLNARWQNGPQASETSQGRS) has biased composition (polar residues).

Belongs to the chitin synthase family. Class VI subfamily. In terms of tissue distribution, moderately expressed during appressorium formation.

It localises to the cell membrane. It catalyses the reaction [(1-&gt;4)-N-acetyl-beta-D-glucosaminyl](n) + UDP-N-acetyl-alpha-D-glucosamine = [(1-&gt;4)-N-acetyl-beta-D-glucosaminyl](n+1) + UDP + H(+). In terms of biological role, polymerizes chitin, a structural polymer of the cell wall and septum, by transferring the sugar moiety of UDP-GlcNAc to the non-reducing end of the growing chitin polymer. Contributes to the production of conidia but is the only chitine synthase that does not contribute to the ability of fungal conidia to germinate. Involved in fungal stress tolerances. This Metarhizium acridum (strain CQMa 102) protein is Chitin synthase VI.